A 252-amino-acid chain; its full sequence is Cell division protein ZapD (252 aa).

Belongs to the ZapD family. In terms of assembly, interacts with FtsZ.

The protein resides in the cytoplasm. Its function is as follows. Cell division factor that enhances FtsZ-ring assembly. Directly interacts with FtsZ and promotes bundling of FtsZ protofilaments, with a reduction in FtsZ GTPase activity. This is Cell division protein ZapD from Cupriavidus necator (strain ATCC 17699 / DSM 428 / KCTC 22496 / NCIMB 10442 / H16 / Stanier 337) (Ralstonia eutropha).